Reading from the N-terminus, the 434-residue chain is Probable glycine dehydrogenase (decarboxylating) subunit 1 (434 aa).

Belongs to the GcvP family. N-terminal subunit subfamily. As to quaternary structure, the glycine cleavage system is composed of four proteins: P, T, L and H. In this organism, the P 'protein' is a heterodimer of two subunits.

The enzyme catalyses N(6)-[(R)-lipoyl]-L-lysyl-[glycine-cleavage complex H protein] + glycine + H(+) = N(6)-[(R)-S(8)-aminomethyldihydrolipoyl]-L-lysyl-[glycine-cleavage complex H protein] + CO2. The glycine cleavage system catalyzes the degradation of glycine. The P protein binds the alpha-amino group of glycine through its pyridoxal phosphate cofactor; CO(2) is released and the remaining methylamine moiety is then transferred to the lipoamide cofactor of the H protein. This Thermoplasma volcanium (strain ATCC 51530 / DSM 4299 / JCM 9571 / NBRC 15438 / GSS1) protein is Probable glycine dehydrogenase (decarboxylating) subunit 1.